We begin with the raw amino-acid sequence, 165 residues long: Growth arrest and DNA damage-inducible protein GADD45 alpha (165 aa).

Position 2 is a phosphothreonine (threonine 2).

This sequence belongs to the GADD45 family. In terms of assembly, interacts with AURKA, GADD45GIP1 and PCNA. Interacts with MAPK14.

It localises to the nucleus. Might affect PCNA interaction with some CDK (cell division protein kinase) complexes; stimulates DNA excision repair in vitro and inhibits entry of cells into S phase. In T-cells, functions as a regulator of p38 MAPKs by inhibiting p88 phosphorylation and activity. The chain is Growth arrest and DNA damage-inducible protein GADD45 alpha (Gadd45a) from Mus musculus (Mouse).